The following is a 457-amino-acid chain: Putative methyltransferase MT1451 (457 aa).

Residues 276 to 282 (CAGPGGK), E301, D325, and D341 each bind S-adenosyl-L-methionine. The active-site Nucleophile is C394.

Belongs to the class I-like SAM-binding methyltransferase superfamily. RsmB/NOP family.

Its function is as follows. May act as RNA methyltransferase. In Mycobacterium tuberculosis (strain CDC 1551 / Oshkosh), this protein is Putative methyltransferase MT1451.